Here is a 572-residue protein sequence, read N- to C-terminus: AAA ATPase forming ring-shaped complexes (572 aa).

Low complexity predominate over residues 1–18 (MTTASQQTSSHSTASSTS). The segment at 1–30 (MTTASQQTSSHSTASSTSRKGNNNDATPSL) is disordered. Residues 42 to 70 (TRNAKLVEMLKASRDKLDALNEQIRALSD) adopt a coiled-coil conformation. 258 to 263 (GCGKTL) is a binding site for ATP. The tract at residues 543–572 (VAHHNRKTTTETEATEPEGTDSGKGHTDAS) is disordered. Positions 563–572 (DSGKGHTDAS) are enriched in basic and acidic residues.

This sequence belongs to the AAA ATPase family. Homohexamer. Assembles into a hexameric ring structure.

The chain is AAA ATPase forming ring-shaped complexes from Corynebacterium kroppenstedtii (strain DSM 44385 / JCM 11950 / CIP 105744 / CCUG 35717).